Here is a 128-residue protein sequence, read N- to C-terminus: Ribosome-binding factor A (128 aa).

This sequence belongs to the RbfA family. Monomer. Binds 30S ribosomal subunits, but not 50S ribosomal subunits or 70S ribosomes.

It localises to the cytoplasm. One of several proteins that assist in the late maturation steps of the functional core of the 30S ribosomal subunit. Associates with free 30S ribosomal subunits (but not with 30S subunits that are part of 70S ribosomes or polysomes). Required for efficient processing of 16S rRNA. May interact with the 5'-terminal helix region of 16S rRNA. This chain is Ribosome-binding factor A, found in Saccharophagus degradans (strain 2-40 / ATCC 43961 / DSM 17024).